Reading from the N-terminus, the 444-residue chain is Phosphoglucosamine mutase (444 aa).

Ser-102 (phosphoserine intermediate) is an active-site residue. Mg(2+) contacts are provided by Ser-102, Asp-241, Asp-243, and Asp-245. Ser-102 is subject to Phosphoserine.

The protein belongs to the phosphohexose mutase family. The cofactor is Mg(2+). In terms of processing, activated by phosphorylation.

The enzyme catalyses alpha-D-glucosamine 1-phosphate = D-glucosamine 6-phosphate. Functionally, catalyzes the conversion of glucosamine-6-phosphate to glucosamine-1-phosphate. The polypeptide is Phosphoglucosamine mutase (Leptothrix cholodnii (strain ATCC 51168 / LMG 8142 / SP-6) (Leptothrix discophora (strain SP-6))).